The following is a 288-amino-acid chain: Glutamate racemase (288 aa).

Residues Asp-10–Ser-11 and Tyr-42–Gly-43 contribute to the substrate site. Cys-73 acts as the Proton donor/acceptor in catalysis. Asn-74–Thr-75 is a substrate binding site. Cys-184 (proton donor/acceptor) is an active-site residue. Thr-185–His-186 lines the substrate pocket.

It belongs to the aspartate/glutamate racemases family.

It carries out the reaction L-glutamate = D-glutamate. Its pathway is cell wall biogenesis; peptidoglycan biosynthesis. Its function is as follows. Provides the (R)-glutamate required for cell wall biosynthesis. This Corynebacterium kroppenstedtii (strain DSM 44385 / JCM 11950 / CIP 105744 / CCUG 35717) protein is Glutamate racemase.